A 336-amino-acid polypeptide reads, in one-letter code: Tyrosine recombinase XerC (336 aa).

Residues V14 to L106 enclose the Core-binding (CB) domain. The region spanning K127–D330 is the Tyr recombinase domain. Catalysis depends on residues R183, K207, H282, R285, and H308. Y317 serves as the catalytic O-(3'-phospho-DNA)-tyrosine intermediate.

It belongs to the 'phage' integrase family. XerC subfamily. As to quaternary structure, forms a cyclic heterotetrameric complex composed of two molecules of XerC and two molecules of XerD.

It localises to the cytoplasm. Its function is as follows. Site-specific tyrosine recombinase, which acts by catalyzing the cutting and rejoining of the recombining DNA molecules. The XerC-XerD complex is essential to convert dimers of the bacterial chromosome into monomers to permit their segregation at cell division. It also contributes to the segregational stability of plasmids. The chain is Tyrosine recombinase XerC from Chlorobaculum parvum (strain DSM 263 / NCIMB 8327) (Chlorobium vibrioforme subsp. thiosulfatophilum).